A 32-amino-acid chain; its full sequence is Cytochrome b6-f complex subunit 7 (32 aa).

A helical transmembrane segment spans residues 5-25 (FIASASISFIITLIGLTLGFA).

Belongs to the PetM family. As to quaternary structure, the 4 large subunits of the cytochrome b6-f complex are cytochrome b6, subunit IV (17 kDa polypeptide, PetD), cytochrome f and the Rieske protein, while the 4 small subunits are PetG, PetL, PetM and PetN. The complex functions as a dimer.

Its subcellular location is the plastid. The protein resides in the chloroplast thylakoid membrane. Component of the cytochrome b6-f complex, which mediates electron transfer between photosystem II (PSII) and photosystem I (PSI), cyclic electron flow around PSI, and state transitions. This chain is Cytochrome b6-f complex subunit 7, found in Guillardia theta (Cryptophyte).